The following is a 499-amino-acid chain: Glycerol kinase (499 aa).

ADP is bound at residue T12. The ATP site is built by T12, T13, and S14. Residue T12 coordinates sn-glycerol 3-phosphate. R16 is an ADP binding site. Sn-glycerol 3-phosphate-binding residues include R82, E83, Y134, and D245. The glycerol site is built by R82, E83, Y134, D245, and Q246. ADP contacts are provided by T267 and G311. Residues T267, G311, Q315, and G412 each coordinate ATP. Residues G412 and N416 each coordinate ADP.

The protein belongs to the FGGY kinase family.

The catalysed reaction is glycerol + ATP = sn-glycerol 3-phosphate + ADP + H(+). It participates in polyol metabolism; glycerol degradation via glycerol kinase pathway; sn-glycerol 3-phosphate from glycerol: step 1/1. Its activity is regulated as follows. Inhibited by fructose 1,6-bisphosphate (FBP). In terms of biological role, key enzyme in the regulation of glycerol uptake and metabolism. Catalyzes the phosphorylation of glycerol to yield sn-glycerol 3-phosphate. The chain is Glycerol kinase from Brucella anthropi (strain ATCC 49188 / DSM 6882 / CCUG 24695 / JCM 21032 / LMG 3331 / NBRC 15819 / NCTC 12168 / Alc 37) (Ochrobactrum anthropi).